The sequence spans 176 residues: Shikimate kinase (176 aa).

17–24 (GMMGVGKS) contributes to the ATP binding site.

This sequence belongs to the shikimate kinase family.

The protein resides in the cytoplasm. It catalyses the reaction shikimate + ATP = 3-phosphoshikimate + ADP + H(+). It participates in metabolic intermediate biosynthesis; chorismate biosynthesis; chorismate from D-erythrose 4-phosphate and phosphoenolpyruvate: step 5/7. The protein is Shikimate kinase of Zymomonas mobilis subsp. mobilis (strain ATCC 31821 / ZM4 / CP4).